The chain runs to 430 residues: Serine--tRNA ligase (430 aa).

237–239 provides a ligand contact to L-serine; sequence TAE. 268–270 lines the ATP pocket; sequence RSE. Residue E291 participates in L-serine binding. 355-358 serves as a coordination point for ATP; the sequence is EISS. An L-serine-binding site is contributed by S391.

Belongs to the class-II aminoacyl-tRNA synthetase family. Type-1 seryl-tRNA synthetase subfamily. In terms of assembly, homodimer. The tRNA molecule binds across the dimer.

The protein resides in the cytoplasm. It catalyses the reaction tRNA(Ser) + L-serine + ATP = L-seryl-tRNA(Ser) + AMP + diphosphate + H(+). The catalysed reaction is tRNA(Sec) + L-serine + ATP = L-seryl-tRNA(Sec) + AMP + diphosphate + H(+). It functions in the pathway aminoacyl-tRNA biosynthesis; selenocysteinyl-tRNA(Sec) biosynthesis; L-seryl-tRNA(Sec) from L-serine and tRNA(Sec): step 1/1. Catalyzes the attachment of serine to tRNA(Ser). Is also able to aminoacylate tRNA(Sec) with serine, to form the misacylated tRNA L-seryl-tRNA(Sec), which will be further converted into selenocysteinyl-tRNA(Sec). This chain is Serine--tRNA ligase, found in Escherichia coli O139:H28 (strain E24377A / ETEC).